We begin with the raw amino-acid sequence, 275 residues long: Undecaprenyl-diphosphatase (275 aa).

Transmembrane regions (helical) follow at residues leucine 2–isoleucine 22, phenylalanine 43–tyrosine 63, tryptophan 83–leucine 103, leucine 111–isoleucine 131, threonine 147–glycine 167, tyrosine 186–leucine 206, leucine 221–isoleucine 241, and alanine 255–histidine 275.

The protein belongs to the UppP family.

Its subcellular location is the cell membrane. It carries out the reaction di-trans,octa-cis-undecaprenyl diphosphate + H2O = di-trans,octa-cis-undecaprenyl phosphate + phosphate + H(+). Catalyzes the dephosphorylation of undecaprenyl diphosphate (UPP). Confers resistance to bacitracin. This chain is Undecaprenyl-diphosphatase, found in Lactiplantibacillus plantarum (strain ATCC BAA-793 / NCIMB 8826 / WCFS1) (Lactobacillus plantarum).